Reading from the N-terminus, the 296-residue chain is Remorin 4.1 (296 aa).

Disordered stretches follow at residues 1-78, 121-142, and 242-266; these read MLTL…SGEN, TRIG…DSNP, and EKTQ…EGKR. The segment covering 21–39 has biased composition (basic and acidic residues); it reads ASDRRDETPSSEIVVRDIH. Polar residues-rich tracts occupy residues 41 to 53 and 62 to 78; these read MTTT…PQQR and PSRS…SGEN. Composition is skewed to basic and acidic residues over residues 121 to 135 and 253 to 266; these read TRIG…HGQV and RKAE…EGKR. Residues 226–261 are a coiled coil; it reads MKKIERKLEDRRAKAMEKTQNKVAKAQRKAEERRAT.

It belongs to the remorin family. Forms homodimer and heterodimer with REM4.2. Interacts with KIN11. Phosphorylated by KIN11. Post-translationally, probably ubiquitinated and degraded by the 26S proteasome pathway. In terms of tissue distribution, predominantly detected in bud, stem, root, flower, silique, and leaves, and enhanced dramatically in senescence leaf.

The protein localises to the cell membrane. Its function is as follows. Collaborates with REM4.2 to positively regulate the BCTV and BSCTV susceptibility. The sequence is that of Remorin 4.1 from Arabidopsis thaliana (Mouse-ear cress).